Here is a 638-residue protein sequence, read N- to C-terminus: Dihydrolipoyllysine-residue acetyltransferase component of pyruvate dehydrogenase complex (638 aa).

Lipoyl-binding domains lie at 2–74 and 117–191; these read SEII…IELE and SQEV…LTLR. Position 40 is an N6-lipoyllysine (K40). Low complexity predominate over residues 90-117; the sequence is PAAPTQAVDEAEAPSPGASATPAPAAAS. Positions 90–119 are disordered; it reads PAAPTQAVDEAEAPSPGASATPAPAAASQE. The residue at position 157 (K157) is an N6-lipoyllysine. The disordered stretch occupies residues 201–220; the sequence is APAAAAAASPAPAPLAPAAA. The region spanning 222 to 296 is the Lipoyl-binding 3 domain; the sequence is PQEVKVPDIG…GTGDQILTLR (75 aa). K262 carries the post-translational modification N6-lipoyllysine. Over residues 301 to 320 the composition is skewed to low complexity; that stretch reads APSGPRARGSPGQAAAAPGA. The segment at 301-336 is disordered; the sequence is APSGPRARGSPGQAAAAPGAAPAPAPVGAPSRNGAK. The region spanning 338–375 is the Peripheral subunit-binding (PSBD) domain; sequence HAGPAVRQLAREFGVELAAINSTGPRGRILKEDVQAYV. Residues 382–638 form a catalytic region; the sequence is AKEAPAAGAA…LLADIRAILL (257 aa). Residue H611 is part of the active site.

The protein belongs to the 2-oxoacid dehydrogenase family. As to quaternary structure, forms a 24-polypeptide structural core with octahedral symmetry. The cofactor is (R)-lipoate.

The enzyme catalyses N(6)-[(R)-dihydrolipoyl]-L-lysyl-[protein] + acetyl-CoA = N(6)-[(R)-S(8)-acetyldihydrolipoyl]-L-lysyl-[protein] + CoA. Its function is as follows. The pyruvate dehydrogenase complex catalyzes the overall conversion of pyruvate to acetyl-CoA and CO(2). It contains multiple copies of three enzymatic components: pyruvate dehydrogenase (E1), dihydrolipoamide acetyltransferase (E2) and lipoamide dehydrogenase (E3). The chain is Dihydrolipoyllysine-residue acetyltransferase component of pyruvate dehydrogenase complex from Azotobacter vinelandii.